The sequence spans 205 residues: Small ribosomal subunit protein uS7 (205 aa).

This sequence belongs to the universal ribosomal protein uS7 family. In terms of assembly, part of the 30S ribosomal subunit.

Functionally, one of the primary rRNA binding proteins, it binds directly to 16S rRNA where it nucleates assembly of the head domain of the 30S subunit. Is located at the subunit interface close to the decoding center. The polypeptide is Small ribosomal subunit protein uS7 (Aeropyrum pernix (strain ATCC 700893 / DSM 11879 / JCM 9820 / NBRC 100138 / K1)).